Consider the following 172-residue polypeptide: Lipoprotein signal peptidase (172 aa).

The next 3 membrane-spanning stretches (helical) occupy residues 10–30 (LIWL…KAWV), 68–88 (WQLW…AFWL), and 98–118 (SALP…DRLM). Catalysis depends on residues Asp-124 and Asp-142. A helical transmembrane segment spans residues 138 to 158 (FNIADSAIVGGAIGIAVFGLF).

The protein belongs to the peptidase A8 family.

It is found in the cell inner membrane. It catalyses the reaction Release of signal peptides from bacterial membrane prolipoproteins. Hydrolyzes -Xaa-Yaa-Zaa-|-(S,diacylglyceryl)Cys-, in which Xaa is hydrophobic (preferably Leu), and Yaa (Ala or Ser) and Zaa (Gly or Ala) have small, neutral side chains.. The protein operates within protein modification; lipoprotein biosynthesis (signal peptide cleavage). In terms of biological role, this protein specifically catalyzes the removal of signal peptides from prolipoproteins. This Xanthomonas axonopodis pv. citri (strain 306) protein is Lipoprotein signal peptidase.